A 402-amino-acid polypeptide reads, in one-letter code: Nuclear hormone receptor family member nhr-96 (402 aa).

The segment at residues 4–79 (FGLCAVCGQV…VGMDVKKIQQ (76 aa)) is a DNA-binding region (nuclear receptor). 2 NR C4-type zinc fingers span residues 7–27 (CAVC…CRSC) and 44–67 (CVKA…LKRC). Residues 154-402 (NYYNSLELLT…FSDPEMFELT (249 aa)) form the NR LBD domain.

Belongs to the nuclear hormone receptor family.

The protein resides in the nucleus. In terms of biological role, orphan nuclear receptor. The sequence is that of Nuclear hormone receptor family member nhr-96 (nhr-96) from Caenorhabditis elegans.